The chain runs to 333 residues: uncharacterized protein (333 aa).

Residues 94–122 (NLYREVWRELEEEQNKVEKLREYILKLDS) are a coiled coil.

This is an uncharacterized protein from Aquifex aeolicus (strain VF5).